Here is a 233-residue protein sequence, read N- to C-terminus: 7-cyano-7-deazaguanine synthase (233 aa).

7 to 17 (LSGGLDSAVTS) lines the ATP pocket. 4 residues coordinate Zn(2+): Cys195, Cys206, Cys209, and Cys212.

It belongs to the QueC family. It depends on Zn(2+) as a cofactor.

The enzyme catalyses 7-carboxy-7-deazaguanine + NH4(+) + ATP = 7-cyano-7-deazaguanine + ADP + phosphate + H2O + H(+). It participates in purine metabolism; 7-cyano-7-deazaguanine biosynthesis. Catalyzes the ATP-dependent conversion of 7-carboxy-7-deazaguanine (CDG) to 7-cyano-7-deazaguanine (preQ(0)). The protein is 7-cyano-7-deazaguanine synthase of Methanococcus maripaludis (strain C6 / ATCC BAA-1332).